The following is a 274-amino-acid chain: Elongation factor Ts (274 aa).

The segment at 82 to 85 (TDFV) is involved in Mg(2+) ion dislocation from EF-Tu.

The protein belongs to the EF-Ts family.

It localises to the cytoplasm. Functionally, associates with the EF-Tu.GDP complex and induces the exchange of GDP to GTP. It remains bound to the aminoacyl-tRNA.EF-Tu.GTP complex up to the GTP hydrolysis stage on the ribosome. This chain is Elongation factor Ts, found in Flavobacterium psychrophilum (strain ATCC 49511 / DSM 21280 / CIP 103535 / JIP02/86).